Consider the following 480-residue polypeptide: Adenosylmethionine-8-amino-7-oxononanoate aminotransferase (480 aa).

126-127 (GS) contributes to the pyridoxal 5'-phosphate binding site. Tyrosine 160 contacts substrate. Pyridoxal 5'-phosphate is bound at residue aspartate 270. Position 314 is an N6-(pyridoxal phosphate)lysine (lysine 314). Glycine 350 is a binding site for substrate. 351 to 352 (PT) serves as a coordination point for pyridoxal 5'-phosphate. Arginine 441 is a substrate binding site.

The protein belongs to the class-III pyridoxal-phosphate-dependent aminotransferase family. BioA subfamily. Pyridoxal 5'-phosphate is required as a cofactor.

The enzyme catalyses (8S)-8-amino-7-oxononanoate + S-adenosyl-L-methionine = S-adenosyl-4-methylsulfanyl-2-oxobutanoate + (7R,8S)-7,8-diammoniononanoate. Its pathway is cofactor biosynthesis; biotin biosynthesis; 7,8-diaminononanoate from 8-amino-7-oxononanoate (SAM route): step 1/1. Catalyzes the transfer of the alpha-amino group from S-adenosyl-L-methionine (SAM) to 7-keto-8-aminopelargonic acid (KAPA) to form 7,8-diaminopelargonic acid (DAPA). It is the only aminotransferase known to utilize SAM as an amino donor. This is Adenosylmethionine-8-amino-7-oxononanoate aminotransferase from Saccharomyces cerevisiae (strain ATCC 204508 / S288c) (Baker's yeast).